The chain runs to 471 residues: Putative multidrug resistance protein MdtD (471 aa).

Topologically, residues 1–11 (MTDLPDSTRWQ) are periplasmic. A helical membrane pass occupies residues 12 to 32 (LWIVAFGFFMQSLDTTIVNTA). Residues 33–48 (LPSMAQSLGESPLHMH) lie on the Cytoplasmic side of the membrane. Residues 49–69 (MVIVSYVLTVAVMLPASGWLA) form a helical membrane-spanning segment. Topologically, residues 70 to 76 (DKVGVRN) are periplasmic. Residues 77-97 (IFFTAIVLFTLGSLFCALSGT) traverse the membrane as a helical segment. The Cytoplasmic segment spans residues 98-101 (LNEL). A helical transmembrane segment spans residues 102–124 (LLARALQGVGGAMMVPVGRLTVM). The Periplasmic segment spans residues 125–137 (KIVPREQYMAAMT). Residues 138–158 (FVTLPGQVGPLLGPALGGLLV) form a helical membrane-spanning segment. Residues 159-164 (EYASWH) are Cytoplasmic-facing. The helical transmembrane segment at 165–185 (WIFLINIPVGIIGAIATLMLM) threads the bilayer. At 186 to 196 (PNYTMQTRRFD) the chain is on the periplasmic side. The chain crosses the membrane as a helical span at residues 197–217 (LSGFLLLAVGMAVLTLALDGS). The Cytoplasmic segment spans residues 218-224 (KGTGLSP). Residues 225–245 (LAIAGLVAVGVVALVLYLLHA) form a helical membrane-spanning segment. Topologically, residues 246-262 (RNNNRALFSLKLFRTRT) are periplasmic. A helical transmembrane segment spans residues 263–283 (FSLGLAGSFAGRIGSGMLPFM). At 284–285 (TP) the chain is on the cytoplasmic side. Residues 286 to 306 (VFLQIGLGFSPFHAGLMMIPM) form a helical membrane-spanning segment. Topologically, residues 307-341 (VLGSMGMKRIVVQVVNRFGYRRVLVATTLGLSLVT) are periplasmic. The helical transmembrane segment at 342–362 (LLFMTTALLGWYYVLPFVLFL) threads the bilayer. At 363-395 (QGMVNSTRFSSMNTLTLKDLPDNLASSGNSLLS) the chain is on the cytoplasmic side. A helical transmembrane segment spans residues 396-416 (MIMQLSMSIGVTIAGLLLGLF). Topologically, residues 417-430 (GSQHVSIDSGTTQT) are periplasmic. A helical transmembrane segment spans residues 431–451 (VFMYTWLSMALIIALPAFIFA). At 452–471 (RVPNDTHQNVAISRRKRSAQ) the chain is on the cytoplasmic side.

Belongs to the major facilitator superfamily. TCR/Tet family.

The protein localises to the cell inner membrane. The chain is Putative multidrug resistance protein MdtD from Escherichia coli (strain 55989 / EAEC).